Here is a 282-residue protein sequence, read N- to C-terminus: Transcription factor MYB20 (282 aa).

HTH myb-type domains follow at residues 9–61 (KVGL…TNYL) and 62–116 (RPDL…KKKL). 2 consecutive DNA-binding regions (H-T-H motif) follow at residues 37–61 (WRAV…TNYL) and 89–112 (WSKI…NTHI).

As to expression, expressed in chalaza of mature seeds, cotyledons, rosette leaves, cauline leaves, veins of stems, mature siliques, sepals and styles. Expressed at low levels in roots.

It is found in the nucleus. Transcription factor that acts as a positive regulator of abscisic acid (ABA) signaling in response to salt stress. Acts as a negative regulator ABI1, ABI2 and PP2CA, which are protein phosphatases 2C acting as negative regulator of ABA signaling. Binds to the DNA specific sequence and core element 5'-ACGT-3' found in the promoters of ABI1 and PP2CA to negatively regulate their expression during ABA-dependent salt stress response. This chain is Transcription factor MYB20, found in Arabidopsis thaliana (Mouse-ear cress).